Reading from the N-terminus, the 419-residue chain is MAAVGVDSRRPETAMEETCNVKGAAAKQGEGLKQYYLQHIHELQRQLRQKTNNLNRLEAQRNELNSRVRMLREELQLLQEPGSYVGEVVKVMGKNKVLVKVHPEGKYVVDIDKSIDITKITPSTRVALRNDSYVLHLVLPSKVDPLVNLMKVEKVPDSTYDMIGGLDQQIKEIKEVIELPIKHPELFESLGIAQPKGVLLYGPPGTGKTLLARAVAHHTDCTFIRVSGSELVQKYIGEGSRMVRELFVMAREHAPSIIFMDEIDSIGSARMESGSGNGDSEVQRTMLELLNQLDGFEASNKIKVLMATNRIDILDQALLRPGRIDRKIEFPNPNEESRFDILKIHSRKMNLMRGIDLKKIAEKMNGASGAELKAVCTEAGMFALRERRVHVTQEDFEMAVAKVMKKDTEKNMSLRKLWK.

A2 carries the N-acetylalanine modification. An ATP-binding site is contributed by 202 to 209; the sequence is GPPGTGKT. K406 participates in a covalent cross-link: Glycyl lysine isopeptide (Lys-Gly) (interchain with G-Cter in ubiquitin).

This sequence belongs to the AAA ATPase family. Component of the 19S regulatory particle (RP/PA700) base subcomplex of the 26S proteasome. The 26S proteasome is composed of a core protease (CP), known as the 20S proteasome, capped at one or both ends by the 19S regulatory particle (RP/PA700). The RP/PA700 complex is composed of at least 17 different subunits in two subcomplexes, the base and the lid, which form the portions proximal and distal to the 20S proteolytic core, respectively.

The protein localises to the cytoplasm. It is found in the nucleus. The 26S proteasome is involved in the ATP-dependent degradation of ubiquitinated proteins. The regulatory (or ATPase) complex confers ATP dependency and substrate specificity to the 26S complex. This chain is 26S proteasome regulatory subunit 8 homolog A (RPT6A), found in Arabidopsis thaliana (Mouse-ear cress).